Reading from the N-terminus, the 721-residue chain is Polyribonucleotide nucleotidyltransferase (721 aa).

2 residues coordinate Mg(2+): Asp495 and Asp501. Residues 562 to 621 (PRLLSFRIDPELIGTVIGPGGRTIKGITERTNTKIDIEDGGIVTIASHDGAAAEEAQKII) enclose the KH domain. Residues 631–699 (GEVFSGSITR…NRGRINLTLR (69 aa)) form the S1 motif domain.

It belongs to the polyribonucleotide nucleotidyltransferase family. Mg(2+) is required as a cofactor.

The protein resides in the cytoplasm. It catalyses the reaction RNA(n+1) + phosphate = RNA(n) + a ribonucleoside 5'-diphosphate. Its function is as follows. Involved in mRNA degradation. Catalyzes the phosphorolysis of single-stranded polyribonucleotides processively in the 3'- to 5'-direction. This chain is Polyribonucleotide nucleotidyltransferase, found in Synechococcus sp. (strain CC9605).